The primary structure comprises 561 residues: Shugoshin 1 (561 aa).

The segment at 1–176 (MAKERCLKKS…DTLGVDFDSG (176 aa)) is necessary for interaction with PPP2CA and PPP2R1A. Residues 7 to 89 (LKKSFQDSLE…DIILQLRKEC (83 aa)) are a coiled coil. A Phosphoserine; by NEK2 modification is found at Ser14. Positions 192 to 200 (RSSLKKHCN) match the D-box 1 motif. Ser256 carries the phosphoserine modification. Disordered regions lie at residues 260–331 (IQPG…SVSS) and 348–441 (FRQK…HLSL). Basic and acidic residues predominate over residues 267–296 (KTKEDILESKSEQTKSKQRDTQERKREEKR). Residues 273 to 313 (LESKSEQTKSKQRDTQERKREEKRKANRRKSKRMSKYKENK) adopt a coiled-coil conformation. Residues 297–307 (KANRRKSKRMS) show a composition bias toward basic residues. The span at 308–318 (KYKENKSENKK) shows a compositional bias: basic and acidic residues. Positions 310–312 (KEN) match the KEN box motif. Positions 364–375 (SEVSLCESSGSG) are enriched in low complexity. Residues 388–398 (YIQNPTSNSDR) show a composition bias toward polar residues. The segment covering 410–421 (KYTDEKETEGSK) has biased composition (basic and acidic residues). Over residues 422–433 (PTKTPTTTPPET) the composition is skewed to low complexity. Position 436 is a phosphoserine (Ser436). A D-box 2 motif is present at residues 438–446 (HLSLKDITN). Residues 451-455 (PVVKI) carry the PXVXL/I motif motif. Positions 457 to 465 (RLSLSPKKN) match the D-box 3 motif. A Phosphoserine; by NEK2 modification is found at Ser507.

Belongs to the shugoshin family. Interacts with PPP2CA (or PPP2CB), PPP2R1B, PPP2R5A, PPP2R5B, PPP2R5C, PPP2R5D, PPP2R5E, SET, LRRC59, RBM10 (or RBM5), RPL10A, RPL28, RPL7, RPL7A and RPLP1. Interaction with protein phosphatase 2A occurs most probably through direct binding to the regulatory B56 subunits: PPP2R1B, PPP2R5A, PPP2R5B, PPP2R5C, PPP2R5D, PPP2R5E. Interacts with PPP2R1A and NEK2. Isoform 3 interacts with PLK1. Interacts with CDCA8. Ubiquitinated and degraded during mitotic exit by APC/C-Cdh1. Post-translationally, phosphorylation by NEK2 is essential for chromosome congression in mitosis and for the proper attachment of spindle microtubule to the kinetochore. Phosphorylated by PLK1 and AUKRB. In terms of tissue distribution, widely expressed. Highly expressed in testis. Expressed in lung, small intestine, breast, liver and placenta. Strongly overexpressed in 90% of breast cancers tested.

It is found in the nucleus. Its subcellular location is the chromosome. It localises to the centromere. The protein resides in the kinetochore. The protein localises to the cytoplasm. It is found in the cytoskeleton. Its subcellular location is the spindle pole. It localises to the microtubule organizing center. The protein resides in the centrosome. The protein localises to the nucleus speckle. Plays a central role in chromosome cohesion during mitosis by preventing premature dissociation of cohesin complex from centromeres after prophase, when most of cohesin complex dissociates from chromosomes arms. May act by preventing phosphorylation of the STAG2 subunit of cohesin complex at the centromere, ensuring cohesin persistence at centromere until cohesin cleavage by ESPL1/separase at anaphase. Essential for proper chromosome segregation during mitosis and this function requires interaction with PPP2R1A. Its phosphorylated form is necessary for chromosome congression and for the proper attachment of spindle microtubule to the kinetochore. Necessary for kinetochore localization of PLK1 and CENPF. May play a role in the tension sensing mechanism of the spindle-assembly checkpoint by regulating PLK1 kinetochore affinity. Isoform 3 plays a role in maintaining centriole cohesion involved in controlling spindle pole integrity. Involved in centromeric enrichment of AUKRB in prometaphase. This chain is Shugoshin 1, found in Homo sapiens (Human).